We begin with the raw amino-acid sequence, 505 residues long: Catalase (505 aa).

Catalysis depends on residues His-56 and Asn-129. Residue Tyr-339 coordinates heme.

It belongs to the catalase family. Requires heme as cofactor.

The protein localises to the cytoplasm. It catalyses the reaction 2 H2O2 = O2 + 2 H2O. In terms of biological role, decomposes hydrogen peroxide into water and oxygen; serves to protect cells from the toxic effects of hydrogen peroxide. The protein is Catalase (katA) of Helicobacter pylori (strain J99 / ATCC 700824) (Campylobacter pylori J99).